A 324-amino-acid polypeptide reads, in one-letter code: Elongation factor P--(R)-beta-lysine ligase (324 aa).

75-77 (SPE) is a binding site for substrate. ATP is bound by residues 99–101 (RNK) and Asn108. Position 117 (Tyr117) interacts with substrate. 243–244 (EL) is a binding site for ATP. Glu250 contacts substrate. Gly299 is an ATP binding site.

Belongs to the class-II aminoacyl-tRNA synthetase family. EpmA subfamily. As to quaternary structure, homodimer.

It carries out the reaction D-beta-lysine + L-lysyl-[protein] + ATP = N(6)-((3R)-3,6-diaminohexanoyl)-L-lysyl-[protein] + AMP + diphosphate + H(+). Functionally, with EpmB is involved in the beta-lysylation step of the post-translational modification of translation elongation factor P (EF-P). Catalyzes the ATP-dependent activation of (R)-beta-lysine produced by EpmB, forming a lysyl-adenylate, from which the beta-lysyl moiety is then transferred to the epsilon-amino group of a conserved specific lysine residue in EF-P. The sequence is that of Elongation factor P--(R)-beta-lysine ligase from Buchnera aphidicola subsp. Acyrthosiphon pisum (strain APS) (Acyrthosiphon pisum symbiotic bacterium).